The primary structure comprises 391 residues: Phosphoglycerate kinase (391 aa).

Residues D21 to N23, R36, H59 to R62, R113, and R146 contribute to the substrate site. ATP is bound by residues K197, E319, and G345–T348.

The protein belongs to the phosphoglycerate kinase family. As to quaternary structure, monomer.

The protein resides in the cytoplasm. It carries out the reaction (2R)-3-phosphoglycerate + ATP = (2R)-3-phospho-glyceroyl phosphate + ADP. Its pathway is carbohydrate degradation; glycolysis; pyruvate from D-glyceraldehyde 3-phosphate: step 2/5. The protein is Phosphoglycerate kinase of Shewanella baltica (strain OS223).